We begin with the raw amino-acid sequence, 312 residues long: Ribosomal RNA small subunit methyltransferase H (312 aa).

S-adenosyl-L-methionine-binding positions include 35–37 (GGH), Asp-55, Phe-79, Asp-100, and Gln-107. Residues 279–312 (LVGKSQRPGPGEVAANPRSRSAVMRVAERTGGAA) form a disordered region.

It belongs to the methyltransferase superfamily. RsmH family.

It is found in the cytoplasm. The catalysed reaction is cytidine(1402) in 16S rRNA + S-adenosyl-L-methionine = N(4)-methylcytidine(1402) in 16S rRNA + S-adenosyl-L-homocysteine + H(+). Specifically methylates the N4 position of cytidine in position 1402 (C1402) of 16S rRNA. The chain is Ribosomal RNA small subunit methyltransferase H from Aromatoleum aromaticum (strain DSM 19018 / LMG 30748 / EbN1) (Azoarcus sp. (strain EbN1)).